The chain runs to 215 residues: Sodium channel regulatory subunit beta-2 (215 aa).

The first 29 residues, 1–29 (MHRDAWLPRPAFSLTGLSLFFSLVPPGRS), serve as a signal peptide directing secretion. Residues 30–157 (MEVTAPTTLS…LEVPPERDST (128 aa)) are Extracellular-facing. The Ig-like C2-type domain maps to 32 to 154 (VTAPTTLSVL…QVLLEVPPER (123 aa)). N-linked (GlcNAc...) asparagine glycosylation is found at Asn42, Asn66, and Asn74. 2 disulfide bridges follow: Cys50-Cys127 and Cys72-Cys75. Residues 158–179 (VAVIVGASVGGFLAVVILVLMV) traverse the membrane as a helical segment. The Cytoplasmic segment spans residues 180–215 (VKCVRRKKEQKLSTDDLKTEEEGKMDGEGNAEDGTK). The tract at residues 188 to 215 (EQKLSTDDLKTEEEGKMDGEGNAEDGTK) is disordered. Over residues 189-215 (QKLSTDDLKTEEEGKMDGEGNAEDGTK) the composition is skewed to basic and acidic residues. Position 192 is a phosphoserine (Ser192).

The protein belongs to the sodium channel auxiliary subunit SCN2B (TC 8.A.17) family. A voltage-gated sodium (Nav) channel consists of an ion-conducting pore-forming alpha subunit functional on its own that is regulated by one or more beta subunits. The beta subunit SCN2B is disulfide-linked to the pore-forming alpha subunit. Interacts with SCN1A; regulatory subunit of SCN1A/Nav1.1. Interacts with SCN2A; regulatory subunit of SCN2A/Nav1.2. Interacts with SCN3A; regulatory subunit of SCN3A/Nav1.3. Interacts with SCN5A; regulatory subunit of SCN5A/Nav1.5. Interacts with SCN8A; regulatory subunit of SCN8A/Nav1.6. Interacts with SCN9A; regulatory subunit of SCN9A/Nav1.7. Interacts with SCN10A; regulatory subunit of SCN10A/Nav1.8. Interacts with TNR; may play a crucial role in clustering and regulation of activity of SCN2B-containing Nav channels at nodes of Ranvier.

It localises to the cell membrane. The protein resides in the cell projection. The protein localises to the axon. In terms of biological role, regulatory subunit of multiple voltage-gated sodium (Nav) channels directly mediating the depolarization of excitable membranes. Navs, also called VGSCs (voltage-gated sodium channels) or VDSCs (voltage-dependent sodium channels), operate by switching between closed and open conformations depending on the voltage difference across the membrane. In the open conformation they allow Na(+) ions to selectively pass through the pore, along their electrochemical gradient. The influx of Na+ ions provokes membrane depolarization, initiating the propagation of electrical signals throughout cells and tissues. The accessory beta subunits participate in localization and functional modulation of the Nav channels. Modulates the activity of SCN1A/Nav1.1, SCN2A/Nav1.2, SCN2A/Nav1.3, SCN5A/Nav1.5, SCN8A/Nav1.6, SCN9A/Nav1.7 and SCN10A/Nav1.8. The protein is Sodium channel regulatory subunit beta-2 of Mus musculus (Mouse).